The sequence spans 266 residues: tRNA (guanine-N(1)-)-methyltransferase (266 aa).

S-adenosyl-L-methionine is bound by residues Gly113 and 137 to 142 (LGDYVL).

Belongs to the RNA methyltransferase TrmD family. Homodimer.

The protein localises to the cytoplasm. The enzyme catalyses guanosine(37) in tRNA + S-adenosyl-L-methionine = N(1)-methylguanosine(37) in tRNA + S-adenosyl-L-homocysteine + H(+). Specifically methylates guanosine-37 in various tRNAs. The sequence is that of tRNA (guanine-N(1)-)-methyltransferase from Paenarthrobacter aurescens (strain TC1).